The primary structure comprises 438 residues: MNVGFISLGCSKNLVVTEEIIGLFKSNHFNIVNKKEDAEIIVINTCGFIESAKQEAINTILEMAKLKNNKCKYLIVAGCLVQRYKKELEKAIPEVDLFISISEYKQIWKEIENLLDLETGKESNLDYHNRVLTTGSNMAYLKIGEGCDNHCTYCAIPNIQGPYISRTMEDILKEARNLAKQGIKELIVIAQDTTKYGLDIYGEARLPQLLEELCKIEDIEWVRFLYVYPESITDELIKVVGENDKICNYFDIPIQHISDSVLKRMNRKSDGASVRNIIEKIRREIPDVIIRTTLIVGFPGETEEDFKELYEFVEETKFDKLGVFAYSKEDNTPAAKLKEQIHHATKKSRLRKIMALQEKISRESLEQKVGNVYKVLIESRTKGGNYYIGRTYMDVPDMDGVVYIVNNTKENLMNTFVDCRIQRAKDYDLFGELYTEGK.

The 116-residue stretch at Met1–Asp116 folds into the MTTase N-terminal domain. [4Fe-4S] cluster-binding residues include Cys10, Cys46, Cys79, Cys147, Cys151, and Cys154. Residues Thr133–Glu363 enclose the Radical SAM core domain. The region spanning Glu366–Thr435 is the TRAM domain.

Belongs to the methylthiotransferase family. RimO subfamily. Requires [4Fe-4S] cluster as cofactor.

The protein resides in the cytoplasm. The enzyme catalyses L-aspartate(89)-[ribosomal protein uS12]-hydrogen + (sulfur carrier)-SH + AH2 + 2 S-adenosyl-L-methionine = 3-methylsulfanyl-L-aspartate(89)-[ribosomal protein uS12]-hydrogen + (sulfur carrier)-H + 5'-deoxyadenosine + L-methionine + A + S-adenosyl-L-homocysteine + 2 H(+). Its function is as follows. Catalyzes the methylthiolation of an aspartic acid residue of ribosomal protein uS12. In Alkaliphilus oremlandii (strain OhILAs) (Clostridium oremlandii (strain OhILAs)), this protein is Ribosomal protein uS12 methylthiotransferase RimO.